A 218-amino-acid chain; its full sequence is 3,4-dihydroxy-2-butanone 4-phosphate synthase (218 aa).

D-ribulose 5-phosphate contacts are provided by residues 37–38, Asp-42, 150–154, and Glu-174; these read RE and RSGHT. Residue Glu-38 coordinates Mg(2+). Position 153 (His-153) interacts with Mg(2+).

The protein belongs to the DHBP synthase family. Homodimer. Requires Mg(2+) as cofactor. The cofactor is Mn(2+).

It catalyses the reaction D-ribulose 5-phosphate = (2S)-2-hydroxy-3-oxobutyl phosphate + formate + H(+). It participates in cofactor biosynthesis; riboflavin biosynthesis; 2-hydroxy-3-oxobutyl phosphate from D-ribulose 5-phosphate: step 1/1. Catalyzes the conversion of D-ribulose 5-phosphate to formate and 3,4-dihydroxy-2-butanone 4-phosphate. This chain is 3,4-dihydroxy-2-butanone 4-phosphate synthase, found in Hamiltonella defensa subsp. Acyrthosiphon pisum (strain 5AT).